Here is a 415-residue protein sequence, read N- to C-terminus: MSTMREMYPKNGRVILHVDMNCFFASVEIAHDPSLQGKPLAVAGNEKERKGIIITCSYEAREYGIRTTMPLWEAKRLCPQLVVRRPNFTLYREASFQMFQVLSRFTEKIQPVSIDEGYLDITDCYALGSPLEIAKMIQQALLTELQLPCSIGIAPNLFLAKTASDMKKPLGITVLRKRDIPEMIWPLSVEAMHGIGEKTAEKLNEIHIHTIEQLAKGDEHIIRAKIGKHGIDLQKRAKGTDDREVDPSQMGQHKSVGNSMTFSKDMDEEKELLDMLERLSKSVSKRLQKRTLVSYNIQIMIKYHDRRTVTRSKQLKNAIWEERDIFQAASRLWKQHWDGDSVRLLGVTATEIEWKTESVKQLDLFSFEEDAKKEPLLAVIDQINDKYGTPILQRGSQLLRKQEKSFQQKLENKFM.

The 182-residue stretch at 15–196 folds into the UmuC domain; the sequence is ILHVDMNCFF…LSVEAMHGIG (182 aa). Positions 19 and 115 each coordinate Mg(2+). E116 is an active-site residue. Over residues 235–246 the composition is skewed to basic and acidic residues; that stretch reads KRAKGTDDREVD. The disordered stretch occupies residues 235-260; the sequence is KRAKGTDDREVDPSQMGQHKSVGNSM. Residues 249–260 show a composition bias toward polar residues; that stretch reads QMGQHKSVGNSM.

It belongs to the DNA polymerase type-Y family. In terms of assembly, monomer. The cofactor is Mg(2+).

It is found in the cytoplasm. The catalysed reaction is DNA(n) + a 2'-deoxyribonucleoside 5'-triphosphate = DNA(n+1) + diphosphate. Its function is as follows. Poorly processive, error-prone DNA polymerase involved in untargeted mutagenesis. Copies undamaged DNA at stalled replication forks, which arise in vivo from mismatched or misaligned primer ends. These misaligned primers can be extended by PolIV. Exhibits no 3'-5' exonuclease (proofreading) activity. May be involved in translesional synthesis, in conjunction with the beta clamp from PolIII. In Bacillus cereus (strain ATCC 14579 / DSM 31 / CCUG 7414 / JCM 2152 / NBRC 15305 / NCIMB 9373 / NCTC 2599 / NRRL B-3711), this protein is DNA polymerase IV.